The following is a 383-amino-acid chain: MKKHINIKFGELFLKGKNKKEFIKALFKNVNKALSDFEFKLLDKHSMFTLEYCSEDENEIIHILKMIPGIHHFFLCLEAKTDIKEIAKVANGFDKKYKTFKIEVKRRYKEFLDQTEIKKEVATYILKNNEIKVDVHNPELTINIEIYDENKSYVWFDKILGVGGLPIGVNGRCLSLLSGGIDSPVASFLLQKRGQQVDYLTFITDDVTEITLNKLKSLIKQITLNYKIYKPRFFIVDFTKVQHELIHMSNEKYRITLMRRSFYRIAQQLAIKYKMNSLICGDSLGQVASQTIESINTISQVCDKMEIFRPLLTFDKVEIIEIAKQIGTYEISISEHEDVCSMFAPKHPITKPKLSIALALENELELLKSLEDRAVANVQIIKE.

The THUMP domain occupies Asn58–Lys158. Residues Leu176 to Leu177, Thr201 to Phe202, Arg259, Gly281, and Gln290 contribute to the ATP site.

This sequence belongs to the ThiI family.

Its subcellular location is the cytoplasm. It carries out the reaction [ThiI sulfur-carrier protein]-S-sulfanyl-L-cysteine + a uridine in tRNA + 2 reduced [2Fe-2S]-[ferredoxin] + ATP + H(+) = [ThiI sulfur-carrier protein]-L-cysteine + a 4-thiouridine in tRNA + 2 oxidized [2Fe-2S]-[ferredoxin] + AMP + diphosphate. The catalysed reaction is [ThiS sulfur-carrier protein]-C-terminal Gly-Gly-AMP + S-sulfanyl-L-cysteinyl-[cysteine desulfurase] + AH2 = [ThiS sulfur-carrier protein]-C-terminal-Gly-aminoethanethioate + L-cysteinyl-[cysteine desulfurase] + A + AMP + 2 H(+). Its pathway is cofactor biosynthesis; thiamine diphosphate biosynthesis. Functionally, catalyzes the ATP-dependent transfer of a sulfur to tRNA to produce 4-thiouridine in position 8 of tRNAs, which functions as a near-UV photosensor. Also catalyzes the transfer of sulfur to the sulfur carrier protein ThiS, forming ThiS-thiocarboxylate. This is a step in the synthesis of thiazole, in the thiamine biosynthesis pathway. The sulfur is donated as persulfide by IscS. The polypeptide is Probable tRNA sulfurtransferase (Malacoplasma penetrans (strain HF-2) (Mycoplasma penetrans)).